We begin with the raw amino-acid sequence, 200 residues long: Prolactin (200 aa).

Intrachain disulfides connect Cys4-Cys11, Cys59-Cys175, and Cys192-Cys200.

The protein belongs to the somatotropin/prolactin family. Pituitary gland.

The protein resides in the secreted. This chain is Prolactin (prl), found in Protopterus aethiopicus (Marbled lungfish).